Consider the following 203-residue polypeptide: Small ribosomal subunit protein uS4 (203 aa).

The 64-residue stretch at 93 to 156 (RRLDNVVYRL…MKVPAILEAV (64 aa)) folds into the S4 RNA-binding domain.

It belongs to the universal ribosomal protein uS4 family. As to quaternary structure, part of the 30S ribosomal subunit. Contacts protein S5. The interaction surface between S4 and S5 is involved in control of translational fidelity.

Functionally, one of the primary rRNA binding proteins, it binds directly to 16S rRNA where it nucleates assembly of the body of the 30S subunit. In terms of biological role, with S5 and S12 plays an important role in translational accuracy. The chain is Small ribosomal subunit protein uS4 from Streptococcus pyogenes serotype M1.